The sequence spans 142 residues: Coiled-coil-helix-coiled-coil-helix domain-containing protein 10, mitochondrial (142 aa).

The transit peptide at 1–16 (MPRGSRSAASRPASRP) directs the protein to the mitochondrion. A compositionally biased stretch (low complexity) spans 1–20 (MPRGSRSAASRPASRPAAPS). Disordered regions lie at residues 1 to 45 (MPRG…PGLM) and 68 to 97 (ALTGAFSGGSSEPSQPAVQQAPTPAAPQPL). A compositionally biased stretch (pro residues) spans 21–39 (AHPPAHPPPSAAAPAPAPS). A compositionally biased stretch (low complexity) spans 80 to 90 (PSQPAVQQAPT). A CHCH domain is found at 99–140 (MGPCAYEIRQFLDCSTTQSDLSLCEGFSEALKQCKYYHGLSS). 2 consecutive short sequence motifs (cx9C motif) follow at residues 102–112 (CAYEIRQFLDC) and 122–132 (CEGFSEALKQC). Intrachain disulfides connect Cys-102/Cys-132 and Cys-112/Cys-122.

In terms of tissue distribution, ubiquitously expressed. Higher expression is observed in heart and liver.

The protein resides in the mitochondrion intermembrane space. Functionally, may be involved in the maintenance of mitochondrial organization and mitochondrial cristae structure. The protein is Coiled-coil-helix-coiled-coil-helix domain-containing protein 10, mitochondrial (CHCHD10) of Homo sapiens (Human).